A 348-amino-acid chain; its full sequence is Anthranilate phosphoribosyltransferase (348 aa).

5-phospho-alpha-D-ribose 1-diphosphate contacts are provided by residues Gly84, 87–88 (GD), Thr92, 94–97 (NITT), 112–120 (KHGNRSVSS), and Ser124. Residue Gly84 participates in anthranilate binding. Thr96 contacts Mg(2+). Asn115 provides a ligand contact to anthranilate. Arg170 provides a ligand contact to anthranilate. Mg(2+) is bound by residues Asp228 and Glu229.

Belongs to the anthranilate phosphoribosyltransferase family. In terms of assembly, homodimer. Mg(2+) is required as a cofactor.

It catalyses the reaction N-(5-phospho-beta-D-ribosyl)anthranilate + diphosphate = 5-phospho-alpha-D-ribose 1-diphosphate + anthranilate. It functions in the pathway amino-acid biosynthesis; L-tryptophan biosynthesis; L-tryptophan from chorismate: step 2/5. Its function is as follows. Catalyzes the transfer of the phosphoribosyl group of 5-phosphorylribose-1-pyrophosphate (PRPP) to anthranilate to yield N-(5'-phosphoribosyl)-anthranilate (PRA). The protein is Anthranilate phosphoribosyltransferase of Corynebacterium glutamicum (strain R).